The primary structure comprises 95 residues: Pyrimidine/purine nucleoside phosphorylase (95 aa).

The protein belongs to the nucleoside phosphorylase PpnP family.

The catalysed reaction is a purine D-ribonucleoside + phosphate = a purine nucleobase + alpha-D-ribose 1-phosphate. It carries out the reaction adenosine + phosphate = alpha-D-ribose 1-phosphate + adenine. The enzyme catalyses cytidine + phosphate = cytosine + alpha-D-ribose 1-phosphate. It catalyses the reaction guanosine + phosphate = alpha-D-ribose 1-phosphate + guanine. The catalysed reaction is inosine + phosphate = alpha-D-ribose 1-phosphate + hypoxanthine. It carries out the reaction thymidine + phosphate = 2-deoxy-alpha-D-ribose 1-phosphate + thymine. The enzyme catalyses uridine + phosphate = alpha-D-ribose 1-phosphate + uracil. It catalyses the reaction xanthosine + phosphate = alpha-D-ribose 1-phosphate + xanthine. Its function is as follows. Catalyzes the phosphorolysis of diverse nucleosides, yielding D-ribose 1-phosphate and the respective free bases. Can use uridine, adenosine, guanosine, cytidine, thymidine, inosine and xanthosine as substrates. Also catalyzes the reverse reactions. This Enterobacter sp. (strain 638) protein is Pyrimidine/purine nucleoside phosphorylase.